The chain runs to 560 residues: uncharacterized protein (560 aa).

The zn(2)-C6 fungal-type DNA-binding region spans 18–44 (CLRCRRRKVKCDRQYPCSRCKESEESC). Residues 60–80 (LSRPITRETDSSAHQETRTRL) form a disordered region. The segment covering 64–80 (ITRETDSSAHQETRTRL) has biased composition (basic and acidic residues). Residues 182–202 (FATSIILIVTAIAVALSLESF) form a helical membrane-spanning segment.

The protein localises to the nucleus membrane. This is an uncharacterized protein from Schizosaccharomyces pombe (strain 972 / ATCC 24843) (Fission yeast).